A 435-amino-acid polypeptide reads, in one-letter code: NADH-quinone oxidoreductase subunit D (435 aa).

Belongs to the complex I 49 kDa subunit family. In terms of assembly, NDH-1 is composed of 14 different subunits. Subunits NuoB, C, D, E, F, and G constitute the peripheral sector of the complex.

It localises to the cell inner membrane. The catalysed reaction is a quinone + NADH + 5 H(+)(in) = a quinol + NAD(+) + 4 H(+)(out). Functionally, NDH-1 shuttles electrons from NADH, via FMN and iron-sulfur (Fe-S) centers, to quinones in the respiratory chain. The immediate electron acceptor for the enzyme in this species is believed to be ubiquinone. Couples the redox reaction to proton translocation (for every two electrons transferred, four hydrogen ions are translocated across the cytoplasmic membrane), and thus conserves the redox energy in a proton gradient. This chain is NADH-quinone oxidoreductase subunit D, found in Xanthomonas euvesicatoria pv. vesicatoria (strain 85-10) (Xanthomonas campestris pv. vesicatoria).